Here is a 321-residue protein sequence, read N- to C-terminus: Probable arabinan endo-1,5-alpha-L-arabinosidase A (321 aa).

Positions methionine 1 to glycine 19 are cleaved as a signal peptide. Aspartate 34 (proton acceptor) is an active-site residue. Catalysis depends on glutamate 200, which acts as the Proton donor.

It belongs to the glycosyl hydrolase 43 family.

It localises to the secreted. It carries out the reaction Endohydrolysis of (1-&gt;5)-alpha-arabinofuranosidic linkages in (1-&gt;5)-arabinans.. Its pathway is glycan metabolism; L-arabinan degradation. Functionally, endo-1,5-alpha-L-arabinanase involved in degradation of pectin. Its preferred substrate is linear 1,5-alpha-L-arabinan. This is Probable arabinan endo-1,5-alpha-L-arabinosidase A (abnA) from Neosartorya fischeri (strain ATCC 1020 / DSM 3700 / CBS 544.65 / FGSC A1164 / JCM 1740 / NRRL 181 / WB 181) (Aspergillus fischerianus).